The primary structure comprises 249 residues: Flagellar L-ring protein (249 aa).

Residues 1 to 25 (MSRLRTSHALRTAAALVAVGCLASG) form the signal peptide. Cys-26 carries the N-palmitoyl cysteine lipid modification. Cys-26 is lipidated: S-diacylglycerol cysteine.

This sequence belongs to the FlgH family. As to quaternary structure, the basal body constitutes a major portion of the flagellar organelle and consists of four rings (L,P,S, and M) mounted on a central rod.

The protein localises to the cell outer membrane. The protein resides in the bacterial flagellum basal body. Its function is as follows. Assembles around the rod to form the L-ring and probably protects the motor/basal body from shearing forces during rotation. This is Flagellar L-ring protein from Afipia carboxidovorans (strain ATCC 49405 / DSM 1227 / KCTC 32145 / OM5) (Oligotropha carboxidovorans).